A 762-amino-acid polypeptide reads, in one-letter code: Putative cation exchanger YDL206W (762 aa).

The first 26 residues, 1–26, serve as a signal peptide directing secretion; the sequence is MHKPLRWLITIAFYVSNVILIGYSLS. Topologically, residues 27 to 30 are extracellular; sequence SNGS. N28 carries N-linked (GlcNAc...) asparagine glycosylation. A helical membrane pass occupies residues 31–51; that stretch reads ISEFYLHSVVLIECFSLLGVV. The Cytoplasmic segment spans residues 52–102; that stretch reads TSDCLTPSLSYISSNIFHISDRVSGMTLLALGNALPDITSTYQSMKSGVTS. The helical transmembrane segment at 103–123 threads the bilayer; it reads LAIGELFGGIFFLLTVVIGLM. Over 124-156 the chain is Extracellular; the sequence is GCVATIQFQHDKSIETYTEESFDQNLSYDRSNY. N-linked (GlcNAc...) asparagine glycosylation is present at N148. Residues 157–177 traverse the membrane as a helical segment; sequence ILDVGIFTFMLLVSGTFLADG. R178 is a topological domain (cytoplasmic). Residues 179 to 199 form a helical membrane-spanning segment; sequence LYFWECIVMVLTYCCCAVYLI. Topologically, residues 200–501 are extracellular; it reads KSYKYPCEIN…YNYLTDVSLE (302 aa). N-linked (GlcNAc...) asparagine glycosylation is found at N280 and N329. The chain crosses the membrane as a helical span at residues 502–522; sequence IGFFEFLSLLVTTPVSIILYL. Residues 523–554 lie on the Cytoplasmic side of the membrane; that stretch reads SIPSEISQTDHDLPLSYLQNIQLIASPIILNQ. Residues 555-575 traverse the membrane as a helical segment; the sequence is LITNNFSFWLLILSLVIAILL. Topologically, residues 576 to 589 are extracellular; that stretch reads YFKTRTIPNKFNSD. A helical membrane pass occupies residues 590–610; the sequence is IIFTVAFLLSLACLSKAVHII. Residues 611 to 615 lie on the Cytoplasmic side of the membrane; that stretch reads VVTLT. Residues 616-636 form a helical membrane-spanning segment; sequence HWINVFNISETILGLTIFTWG. The Extracellular segment spans residues 637–650; the sequence is NSIGDLVSNITFVK. N645 carries an N-linked (GlcNAc...) asparagine glycan. Residues 651 to 671 traverse the membrane as a helical segment; that stretch reads IGVLEIAIGACFGSPLLYFLF. Residues 672-709 are Cytoplasmic-facing; it reads GVGFDGIMIMLGDKTGKIVSGRDSNILMHHIDFKVDKN. Residues 710–730 traverse the membrane as a helical segment; that stretch reads LINTGVGILIAFLIFTVLIPL. The Extracellular segment spans residues 731–738; sequence NDWKIDKK. A helical membrane pass occupies residues 739 to 759; the sequence is ISIALLTLYIVVTCISVFLEV. Residues 760–762 are Cytoplasmic-facing; it reads HQV.

Belongs to the Ca(2+):cation antiporter (CaCA) (TC 2.A.19) family.

The protein localises to the membrane. Its function is as follows. Putative cation exchanger. The chain is Putative cation exchanger YDL206W from Saccharomyces cerevisiae (strain ATCC 204508 / S288c) (Baker's yeast).